We begin with the raw amino-acid sequence, 399 residues long: MKLMLSLGSLSANSLPIEKKQQVLIDLVIRTYQSHERTELFKAITEYRKNQLIALFPEHANKSYSIIFELMDYRDLIERYPSTLSEEATLLEKVVGQCFMHWLDFWCECEIAAIKAKFPLKENELPAPQLLFEDSAYYGALVERVEDTQLMVQIPSHPQAMPLSDAITLSNLELFIQGEKWYEMLSLLSLSQVGKHFIVLKHPVQDSCPTLVASALIQNWSVRDTWLSYAPQFSNEQWNYCFPSYGYSEFTRLQLFTPSSLSKCYSLPEFDNEFKLQLSDTQAVCEVLRLTVSGNAQQKLYFLYLAQKELMSVLHQAGYKIGFTIIEQPFMLNFYRAIDAKAYFHSGYCDLNDDGKQTYRGFWNFEMMVKAFSNIDFRGYKRAVRASRKRGSLERDEHV.

The protein belongs to the LuxM / VanM family.

It catalyses the reaction a fatty acyl-[ACP] + S-adenosyl-L-methionine = an N-acyl-L-homoserine lactone + S-methyl-5'-thioadenosine + holo-[ACP] + H(+). Functionally, required for the synthesis of an autoinducer molecule beta-hydroxybutyryl homoserine lactone, which binds to LuxN and thus acts in bioluminescence regulation. The protein is Acyl-homoserine-lactone synthase LuxM (luxM) of Vibrio harveyi (Beneckea harveyi).